A 366-amino-acid chain; its full sequence is Peptide chain release factor 2 (366 aa).

Position 251 is an N5-methylglutamine (Q251).

The protein belongs to the prokaryotic/mitochondrial release factor family. Methylated by PrmC. Methylation increases the termination efficiency of RF2.

The protein resides in the cytoplasm. Its function is as follows. Peptide chain release factor 2 directs the termination of translation in response to the peptide chain termination codons UGA and UAA. The polypeptide is Peptide chain release factor 2 (prfB) (Listeria innocua serovar 6a (strain ATCC BAA-680 / CLIP 11262)).